Reading from the N-terminus, the 309-residue chain is Taste receptor type 2 member 31 (309 aa).

Over 1–2 the chain is Extracellular; sequence MT. The chain crosses the membrane as a helical span at residues 3–23; that stretch reads TFIPIIFSSLVMVMFVTGNFA. The Cytoplasmic portion of the chain corresponds to 24 to 55; it reads NGFIALVNSIESVKRQKISYADQILTALAVSR. The chain crosses the membrane as a helical span at residues 56-76; it reads IGLLWVLLLNWYSTVLNPAFY. Over 77-100 the chain is Extracellular; that stretch reads SVEVRTTAYNVWAVTGHFSNWLAT. A helical membrane pass occupies residues 101 to 121; that stretch reads SLSIFYLLKIANFSNLIFLHL. Residues 122–126 lie on the Cytoplasmic side of the membrane; sequence KRRVK. Residues 127–147 form a helical membrane-spanning segment; the sequence is SVILVMLLGPLLFLACQLFVI. At 148–181 the chain is on the extracellular side; it reads NMKEIVQTKEYEGNXTWKIKLRSAVYLSDATVTT. Asn161 is a glycosylation site (N-linked (GlcNAc...) asparagine). Residues 182–202 form a helical membrane-spanning segment; the sequence is LGNLVPFTLTLLCFLLLICSL. The Cytoplasmic portion of the chain corresponds to 203 to 229; the sequence is CKHLKKMQLHGKGSQDPSMKVHIKALQ. A helical membrane pass occupies residues 230–250; that stretch reads TVTSFLLLCAIYFLSIMISVW. Topologically, residues 251–259 are extracellular; that stretch reads SLGSLKNKP. A helical transmembrane segment spans residues 260–280; sequence VFMFCKAMRFSYPSIHPFILI. Residues 281 to 309 lie on the Cytoplasmic side of the membrane; the sequence is WGNKKLKQTFLSVLQQVRYWVKGEKPSSP.

Belongs to the G-protein coupled receptor T2R family.

It localises to the membrane. In terms of biological role, receptor that may play a role in the perception of bitterness and is gustducin-linked. May play a role in sensing the chemical composition of the gastrointestinal content. The activity of this receptor may stimulate alpha gustducin, mediate PLC-beta-2 activation and lead to the gating of TRPM5. The polypeptide is Taste receptor type 2 member 31 (TAS2R31) (Gorilla gorilla gorilla (Western lowland gorilla)).